A 274-amino-acid polypeptide reads, in one-letter code: uncharacterized protein (274 aa).

Residues 253–274 (QTGDVRTTEGTALTDDTTKRNI) form a disordered region.

This is an uncharacterized protein from Deinococcus radiodurans (strain ATCC 13939 / DSM 20539 / JCM 16871 / CCUG 27074 / LMG 4051 / NBRC 15346 / NCIMB 9279 / VKM B-1422 / R1).